The primary structure comprises 366 residues: Peptide chain release factor 2 (366 aa).

At Gln-251 the chain carries N5-methylglutamine.

The protein belongs to the prokaryotic/mitochondrial release factor family. In terms of processing, methylated by PrmC. Methylation increases the termination efficiency of RF2.

The protein resides in the cytoplasm. Peptide chain release factor 2 directs the termination of translation in response to the peptide chain termination codons UGA and UAA. The protein is Peptide chain release factor 2 (prfB) of Listeria monocytogenes serovar 1/2a (strain ATCC BAA-679 / EGD-e).